Reading from the N-terminus, the 224-residue chain is Uridylate kinase (224 aa).

8 to 12 (KITGK) serves as a coordination point for ATP. UMP is bound at residue G43. 2 residues coordinate ATP: G44 and R48. UMP is bound by residues D66 and 114–120 (LIPGQST). Positions 140, 146, and 149 each coordinate ATP.

The protein belongs to the UMP kinase family. As to quaternary structure, homohexamer.

It is found in the cytoplasm. The catalysed reaction is UMP + ATP = UDP + ADP. It participates in pyrimidine metabolism; CTP biosynthesis via de novo pathway; UDP from UMP (UMPK route): step 1/1. Inhibited by UTP. Catalyzes the reversible phosphorylation of UMP to UDP. The chain is Uridylate kinase from Staphylothermus marinus (strain ATCC 43588 / DSM 3639 / JCM 9404 / F1).